The primary structure comprises 728 residues: 1,4-alpha-glucan branching enzyme GlgB (728 aa).

Aspartate 405 acts as the Nucleophile in catalysis. Glutamate 458 serves as the catalytic Proton donor.

It belongs to the glycosyl hydrolase 13 family. GlgB subfamily. In terms of assembly, monomer.

It catalyses the reaction Transfers a segment of a (1-&gt;4)-alpha-D-glucan chain to a primary hydroxy group in a similar glucan chain.. Its pathway is glycan biosynthesis; glycogen biosynthesis. Functionally, catalyzes the formation of the alpha-1,6-glucosidic linkages in glycogen by scission of a 1,4-alpha-linked oligosaccharide from growing alpha-1,4-glucan chains and the subsequent attachment of the oligosaccharide to the alpha-1,6 position. The protein is 1,4-alpha-glucan branching enzyme GlgB of Shigella flexneri serotype 5b (strain 8401).